Consider the following 128-residue polypeptide: L-ectoine synthase (128 aa).

The protein belongs to the ectoine synthase family.

The catalysed reaction is (2S)-4-acetamido-2-aminobutanoate = L-ectoine + H2O. It functions in the pathway amine and polyamine biosynthesis; ectoine biosynthesis; L-ectoine from L-aspartate 4-semialdehyde: step 3/3. Its function is as follows. Catalyzes the circularization of gamma-N-acetyl-alpha,gamma-diaminobutyric acid (ADABA) to ectoine (1,4,5,6-tetrahydro-2-methyl-4-pyrimidine carboxylic acid), which is an excellent osmoprotectant. The protein is L-ectoine synthase of Vibrio campbellii (strain ATCC BAA-1116).